Consider the following 73-residue polypeptide: MKANIHPDYHKITVVMTDGSQYTTRSTWGKEGDVLNLDIDPRTHPAWTGGSQTLVDHGGRISKFKNRFGNLGM.

This sequence belongs to the bacterial ribosomal protein bL31 family. Type A subfamily. As to quaternary structure, part of the 50S ribosomal subunit.

Functionally, binds the 23S rRNA. The polypeptide is Large ribosomal subunit protein bL31 (Bartonella henselae (strain ATCC 49882 / DSM 28221 / CCUG 30454 / Houston 1) (Rochalimaea henselae)).